Reading from the N-terminus, the 237-residue chain is 2-C-methyl-D-erythritol 4-phosphate cytidylyltransferase (237 aa).

The protein belongs to the IspD/TarI cytidylyltransferase family. IspD subfamily.

The catalysed reaction is 2-C-methyl-D-erythritol 4-phosphate + CTP + H(+) = 4-CDP-2-C-methyl-D-erythritol + diphosphate. Its pathway is isoprenoid biosynthesis; isopentenyl diphosphate biosynthesis via DXP pathway; isopentenyl diphosphate from 1-deoxy-D-xylulose 5-phosphate: step 2/6. In terms of biological role, catalyzes the formation of 4-diphosphocytidyl-2-C-methyl-D-erythritol from CTP and 2-C-methyl-D-erythritol 4-phosphate (MEP). The polypeptide is 2-C-methyl-D-erythritol 4-phosphate cytidylyltransferase (Acidithiobacillus ferrooxidans (strain ATCC 23270 / DSM 14882 / CIP 104768 / NCIMB 8455) (Ferrobacillus ferrooxidans (strain ATCC 23270))).